Consider the following 191-residue polypeptide: Large ribosomal subunit protein bL9 (191 aa).

It belongs to the bacterial ribosomal protein bL9 family.

Binds to the 23S rRNA. The protein is Large ribosomal subunit protein bL9 of Granulibacter bethesdensis (strain ATCC BAA-1260 / CGDNIH1).